Consider the following 377-residue polypeptide: Alanine racemase (377 aa).

K37 serves as the catalytic Proton acceptor; specific for D-alanine. An N6-(pyridoxal phosphate)lysine modification is found at K37. R135 is a substrate binding site. Y271 functions as the Proton acceptor; specific for L-alanine in the catalytic mechanism. M319 is a substrate binding site.

It belongs to the alanine racemase family. It depends on pyridoxal 5'-phosphate as a cofactor.

It carries out the reaction L-alanine = D-alanine. It participates in amino-acid biosynthesis; D-alanine biosynthesis; D-alanine from L-alanine: step 1/1. In terms of biological role, catalyzes the interconversion of L-alanine and D-alanine. May also act on other amino acids. The chain is Alanine racemase (alr) from Helicobacter pylori (strain Shi470).